A 1051-amino-acid polypeptide reads, in one-letter code: Integrin alpha-3 (1051 aa).

The first 32 residues, 1 to 32 (MGPGPRCAPGDPGWMLGALALMVAASGRFAFA), serve as a signal peptide directing secretion. At 33–991 (FNLDTRFLVV…LVEELPAEIE (959 aa)) the chain is on the extracellular side. 7 FG-GAP repeats span residues 38-103 (RFLV…KDDC), 110-171 (EKSD…DLQL), 185-235 (CNSN…WDLS), 236-292 (EYSY…GGDL), 293-354 (KRKQ…TSFP), 356-411 (QPSL…GLLR), and 415-477 (QIVH…VARP). A glycan (N-linked (GlcNAc...) asparagine) is linked at asparagine 86. Cystine bridges form between cysteine 94-cysteine 103, cysteine 140-cysteine 162, and cysteine 185-cysteine 197. Aspartate 315, asparagine 317, aspartate 319, aspartate 323, aspartate 378, asparagine 380, aspartate 382, aspartate 386, aspartate 439, aspartate 441, asparagine 443, tyrosine 445, and aspartate 447 together coordinate Ca(2+). Intrachain disulfides connect cysteine 485-cysteine 490 and cysteine 496-cysteine 550. N-linked (GlcNAc...) asparagine glycans are attached at residues asparagine 500, asparagine 511, asparagine 573, and asparagine 605. A disulfide bridge connects residues cysteine 615 and cysteine 621. Residues asparagine 656, asparagine 697, and asparagine 841 are each glycosylated (N-linked (GlcNAc...) asparagine). A disulfide bridge links cysteine 694 with cysteine 702. 2 disulfides stabilise this stretch: cysteine 846/cysteine 904 and cysteine 911/cysteine 916. Residues 860–888 (LSDPGDKPHSPQRRRRQLDPGGDQGSPPV) form a disordered region. N-linked (GlcNAc...) asparagine glycosylation is found at asparagine 923, asparagine 926, asparagine 935, and asparagine 969. A helical membrane pass occupies residues 992–1019 (LWLVLVAVSAGLLLLGLIIILLWKCGFF). A GFFKR motif motif is present at residues 1017 to 1021 (GFFKR). Over 1020 to 1051 (KRARTRALYEAKRQKAEMKSQPSETERLTDDY) the chain is Cytoplasmic.

It belongs to the integrin alpha chain family. In terms of assembly, heterodimer of an alpha and a beta subunit. The alpha subunit is composed of a heavy and a light chain linked by a disulfide bond. Alpha-3 associates with beta-1. Interacts with HPS5. Interacts with FAP (seprase); the interaction occurs at the cell surface of invadopodia membrane in a collagen-dependent manner. Post-translationally, isoform 1, but not isoform 2, is phosphorylated on serine residues.

Its subcellular location is the cell membrane. It localises to the cell projection. The protein localises to the invadopodium membrane. The protein resides in the filopodium membrane. Functionally, integrin alpha-3/beta-1 is a receptor for fibronectin, laminin, collagen, epiligrin, thrombospondin and CSPG4. Integrin alpha-3/beta-1 provides a docking site for FAP (seprase) at invadopodia plasma membranes in a collagen-dependent manner and hence may participate in the adhesion, formation of invadopodia and matrix degradation processes, promoting cell invasion. Alpha-3/beta-1 may mediate with LGALS3 the stimulation by CSPG4 of endothelial cells migration. This is Integrin alpha-3 (ITGA3) from Cricetulus griseus (Chinese hamster).